Here is a 398-residue protein sequence, read N- to C-terminus: MAKLTVKDVDLKGKKVLVRVDFNVPLKDGVITNDNRITAALPTIKYIIEQGGRAILFSHLGRVKEEADKEGKSLAPVAADLAAKLGQDVVFPGVTRGSKLEEAINALEDGQVLLVENTRFEDVDGKKESKNDEELGKYWASLGDGIFVNDAFGTAHRAHASNVGISANVEKAVAGFLLENEIAYIQEAVETPERPFVAILGGSKVSDKIGVIENLLEKADKVLIGGGMTYTFYKAQGIEIGNSLVEEDKLDVAKDLLEKSNGKLILPVDSKEANAFAGYTEVRDTEGEAVSEGFLGLDIGPKSIAKFDEALTGAKTVVWNGPMGVFENPDFQAGTIGVMDAIVKQPGVKSIIGGGDSAAAAINLGRADKFSWISTGGGASMELLEGKVLPGLAALTEK.

Residues 21–23, Arg-36, 59–62, Arg-119, and Arg-157 contribute to the substrate site; these read DFN and HLGR. Residues Lys-208, Gly-296, Glu-327, and 354–357 contribute to the ATP site; that span reads GGDS.

It belongs to the phosphoglycerate kinase family. As to quaternary structure, monomer.

It is found in the cytoplasm. It carries out the reaction (2R)-3-phosphoglycerate + ATP = (2R)-3-phospho-glyceroyl phosphate + ADP. The protein operates within carbohydrate degradation; glycolysis; pyruvate from D-glyceraldehyde 3-phosphate: step 2/5. The chain is Phosphoglycerate kinase from Streptococcus pyogenes serotype M3 (strain ATCC BAA-595 / MGAS315).